The sequence spans 451 residues: MGEISMKSKVCPLIYHFLQENGYVKTAQTFLKETGDKDLAKGKVKKNLLDLLSQKEFLPYLTTEDVGKHKKTKESLEKSNDDSQKISKKGAPPEKAHSSSEASGSGSSSDESDSSSSESESSSEDNDSSSSSSDSESESSSEDSDSSSSSSDSESESSSEGSDSSSSSSSSESESSSEDNDSSSSSSDSESESSSEDSDSSSSSSDSESESSSEGSDSSSSSSSSESESSSEDNDSSSSSSDSESESSSEDSDSSSSSSDSESESSSKDSDSSSNSSDSEDDSSSDSSDSESESSSEDSDSTSSSSDSDSSSSSEDGNSNTDTTTSGEVSAQSSTNSTSSEESTSVKDEDSSKIHDKSLKRKHEDDESSTSTKSSRTTKTPFTRVGDPSQWDFASPALRDNSFNFEDDYGTLANRDLIVTRGKGFRQEKNKKKRGSYRGGRINTEVRSFKF.

The LisH domain occupies 6–38 (MKSKVCPLIYHFLQENGYVKTAQTFLKETGDKD). Positions 59 to 394 (PYLTTEDVGK…VGDPSQWDFA (336 aa)) are disordered. Residues 73–98 (KESLEKSNDDSQKISKKGAPPEKAHS) show a composition bias toward basic and acidic residues. Positions 99–120 (SSEASGSGSSSDESDSSSSESE) are enriched in low complexity. The segment covering 135-145 (SESESSSEDSD) has biased composition (acidic residues). Low complexity predominate over residues 146-174 (SSSSSSDSESESSSEGSDSSSSSSSSESE). The segment covering 189–199 (SESESSSEDSD) has biased composition (acidic residues). The segment covering 200–228 (SSSSSSDSESESSSEGSDSSSSSSSSESE) has biased composition (low complexity). 2 stretches are compositionally biased toward acidic residues: residues 243–253 (SESESSSEDSD) and 278–300 (DSED…EDSD). Residues 301 to 319 (STSSSSDSDSSSSSEDGNS) show a composition bias toward low complexity. A compositionally biased stretch (polar residues) spans 320–332 (NTDTTTSGEVSAQ). Residues 333 to 343 (SSTNSTSSEES) are compositionally biased toward low complexity. A compositionally biased stretch (basic and acidic residues) spans 344–365 (TSVKDEDSSKIHDKSLKRKHED). Residues 369–380 (STSTKSSRTTKT) are compositionally biased toward low complexity.

The protein resides in the nucleus. The protein localises to the nucleolus. The chain is LisH domain-containing protein C1711.05 from Schizosaccharomyces pombe (strain 972 / ATCC 24843) (Fission yeast).